The sequence spans 340 residues: Chitinase 7 (340 aa).

The signal sequence occupies residues 1–32 (MIAARAANLQVAMKALALAVLALAYAAATARA). The region spanning 33-73 (EQCGRQAGGARCPNRLCCSRWGWCGLTDDYCKGGCQSQCRV) is the Chitin-binding type-1 domain. Intrachain disulfides connect Cys35-Cys50, Cys44-Cys56, Cys49-Cys63, Cys67-Cys71, Cys118-Cys173, Cys185-Cys193, and Cys293-Cys323.

It belongs to the glycosyl hydrolase 19 family. Chitinase class I subfamily. In terms of tissue distribution, expressed in pistils, stamens and lodicules.

It catalyses the reaction Random endo-hydrolysis of N-acetyl-beta-D-glucosaminide (1-&gt;4)-beta-linkages in chitin and chitodextrins.. Functionally, hydrolyzes chitin and may play a role in defense against fungal pathogens containing chitin. The polypeptide is Chitinase 7 (Cht7) (Oryza sativa subsp. japonica (Rice)).